A 1178-amino-acid polypeptide reads, in one-letter code: Pyruvate carboxylase, mitochondrial (1178 aa).

The transit peptide at 1–20 directs the protein to the mitochondrion; sequence MLKFRTVHGGLRLLGIRRTS. An N6-acetyllysine mark is found at lysine 35 and lysine 39. One can recognise a Biotin carboxylation domain in the interval 36 to 486; it reads PIKKVMVANR…DTQFIDENPE (451 aa). Residue lysine 79 is modified to N6-acetyllysine; alternate. Lysine 79 carries the post-translational modification N6-succinyllysine; alternate. Lysine 148 and lysine 152 each carry N6-acetyllysine. ATP-binding residues include lysine 152 and glutamate 236. The ATP-grasp domain maps to 156-353; sequence RAIAIAAGVP…LVHAQIHVAE (198 aa). Position 241 is an N6-acetyllysine (lysine 241). Histidine 271 provides a ligand contact to ATP. N6-acetyllysine occurs at positions 297 and 319. Arginine 328 is a catalytic residue. At lysine 434 the chain carries N6-acetyllysine. Lysine 442 carries the post-translational modification N6-succinyllysine. The region spanning 563–832 is the Pyruvate carboxyltransferase domain; it reads LLLMDTTFRD…DTEVPMERVF (270 aa). 571–575 serves as a coordination point for substrate; it reads RDAHQ. Aspartate 572 is a Mn(2+) binding site. Lysine 589 carries the post-translational modification N6-acetyllysine. Substrate is bound at residue arginine 644. 2 positions are modified to N6-acetyllysine: lysine 661 and lysine 717. Lysine 741 is a binding site for Mn(2+). Lysine 741 carries the N6-carboxylysine modification. Lysine 748 carries the N6-acetyllysine modification. Mn(2+)-binding residues include histidine 771 and histidine 773. At lysine 892 the chain carries N6-acetyllysine. Threonine 908 contacts substrate. 2 positions are modified to N6-acetyllysine: lysine 969 and lysine 992. A Phosphothreonine modification is found at threonine 1003. N6-acetyllysine is present on residues lysine 1061, lysine 1090, and lysine 1124. A Biotinyl-binding domain is found at 1109 to 1178; sequence KGQIGAPMPG…EGDDLILEIE (70 aa). N6-biotinyllysine is present on lysine 1144.

As to quaternary structure, homotetramer. Interacts (via the biotin carboxylation domain) with SIRT4. It depends on biotin as a cofactor. Requires Mn(2+) as cofactor. Post-translationally, acetylation of Lys-748 might play a role in catalytic activity regulation.

The protein localises to the mitochondrion matrix. It carries out the reaction hydrogencarbonate + pyruvate + ATP = oxaloacetate + ADP + phosphate + H(+). Its pathway is carbohydrate biosynthesis; gluconeogenesis. Pyruvate carboxylase catalyzes a 2-step reaction, involving the ATP-dependent carboxylation of the covalently attached biotin in the first step and the transfer of the carboxyl group to pyruvate in the second. Catalyzes in a tissue specific manner, the initial reactions of glucose (liver, kidney) and lipid (adipose tissue, liver, brain) synthesis from pyruvate. This chain is Pyruvate carboxylase, mitochondrial, found in Homo sapiens (Human).